Consider the following 149-residue polypeptide: Large-conductance mechanosensitive channel (149 aa).

A run of 2 helical transmembrane segments spans residues 8-28 and 74-94; these read FIMRGSVLDLAVGVVIGSAFT and IGSVISALITFLITAFVLFLI.

The protein belongs to the MscL family. Homopentamer.

The protein localises to the cell membrane. Its function is as follows. Channel that opens in response to stretch forces in the membrane lipid bilayer. May participate in the regulation of osmotic pressure changes within the cell. The protein is Large-conductance mechanosensitive channel of Enterococcus faecalis (strain ATCC 700802 / V583).